Reading from the N-terminus, the 1183-residue chain is DNA-directed RNA polymerase subunit beta (1183 aa).

Positions 1151–1162 are enriched in acidic residues; the sequence is EIEMADVDDEDA. The segment at 1151–1183 is disordered; it reads EIEMADVDDEDAAERKVDLQQKSAPESQKETTD.

Belongs to the RNA polymerase beta chain family. As to quaternary structure, the RNAP catalytic core consists of 2 alpha, 1 beta, 1 beta' and 1 omega subunit. When a sigma factor is associated with the core the holoenzyme is formed, which can initiate transcription.

It carries out the reaction RNA(n) + a ribonucleoside 5'-triphosphate = RNA(n+1) + diphosphate. DNA-dependent RNA polymerase catalyzes the transcription of DNA into RNA using the four ribonucleoside triphosphates as substrates. This chain is DNA-directed RNA polymerase subunit beta, found in Staphylococcus epidermidis (strain ATCC 12228 / FDA PCI 1200).